The chain runs to 360 residues: Probable cinnamyl alcohol dehydrogenase 6 (360 aa).

Residue cysteine 48 coordinates Zn(2+). Threonine 50 contributes to the NADP(+) binding site. Histidine 70, glutamate 71, cysteine 101, cysteine 104, cysteine 107, cysteine 115, and cysteine 164 together coordinate Zn(2+). Residues threonine 168, 192 to 197 (GLGGLG), 215 to 220 (STSPAK), threonine 255, glycine 279, and 302 to 304 (SMT) each bind NADP(+).

The protein belongs to the zinc-containing alcohol dehydrogenase family. In terms of assembly, homodimer. It depends on Zn(2+) as a cofactor.

The catalysed reaction is (E)-cinnamyl alcohol + NADP(+) = (E)-cinnamaldehyde + NADPH + H(+). It catalyses the reaction (E)-coniferol + NADP(+) = (E)-coniferaldehyde + NADPH + H(+). It carries out the reaction (E)-sinapyl alcohol + NADP(+) = (E)-sinapaldehyde + NADPH + H(+). The enzyme catalyses (E)-4-coumaroyl alcohol + NADP(+) = (E)-4-coumaraldehyde + NADPH + H(+). The catalysed reaction is (E)-caffeyl alcohol + NADP(+) = (E)-caffeyl aldehyde + NADPH + H(+). Its pathway is aromatic compound metabolism; phenylpropanoid biosynthesis. Its function is as follows. Involved in lignin biosynthesis. Catalyzes the final step specific for the production of lignin monomers. Catalyzes the NADPH-dependent reduction of coniferaldehyde, 5-hydroxyconiferaldehyde, sinapaldehyde, 4-coumaraldehyde and caffeyl aldehyde to their respective alcohols. This chain is Probable cinnamyl alcohol dehydrogenase 6, found in Oryza sativa subsp. japonica (Rice).